The following is a 431-amino-acid chain: Leucine carboxyl methyltransferase 1 (431 aa).

S-adenosyl-L-methionine-binding positions include arginine 103, glycine 131, aspartate 159, and 219 to 220 (DL). Positions 228-268 (QPQQPLPPGVPIGSRGLHASPFTPGSTTQHEEQTEETSLPQ) are disordered. Position 289 (glutamate 289) interacts with S-adenosyl-L-methionine.

Belongs to the methyltransferase superfamily. LCMT family.

The catalysed reaction is [phosphatase 2A protein]-C-terminal L-leucine + S-adenosyl-L-methionine = [phosphatase 2A protein]-C-terminal L-leucine methyl ester + S-adenosyl-L-homocysteine. Methylates the carboxyl group of the C-terminal leucine residue of protein phosphatase 2A catalytic subunits to form alpha-leucine ester residues. The chain is Leucine carboxyl methyltransferase 1 (ppm-1) from Neurospora crassa (strain ATCC 24698 / 74-OR23-1A / CBS 708.71 / DSM 1257 / FGSC 987).